The chain runs to 1196 residues: DNA-directed RNA polymerase I subunit RPA2 (1196 aa).

The C4-type zinc-finger motif lies at 1097–1124 (CRECGSILTTQSSVPKIGSMVTIRCRRC).

This sequence belongs to the RNA polymerase beta chain family. Component of the RNA polymerase I (Pol I) complex consisting of 14 subunits.

It localises to the nucleus. The protein resides in the nucleolus. The catalysed reaction is RNA(n) + a ribonucleoside 5'-triphosphate = RNA(n+1) + diphosphate. Its function is as follows. DNA-dependent RNA polymerase catalyzes the transcription of DNA into RNA using the four ribonucleoside triphosphates as substrates. Second largest core component of RNA polymerase I which synthesizes ribosomal RNA precursors. Proposed to contribute to the polymerase catalytic activity and forms the polymerase active center together with the largest subunit. Pol I is composed of mobile elements and RPA2 is part of the core element with the central large cleft and probably a clamp element that moves to open and close the cleft. The chain is DNA-directed RNA polymerase I subunit RPA2 (RPA2) from Eremothecium gossypii (strain ATCC 10895 / CBS 109.51 / FGSC 9923 / NRRL Y-1056) (Yeast).